A 58-amino-acid chain; its full sequence is Small ribosomal subunit protein bS21 (58 aa).

Residues 35-58 (REHYEKPSVKKKKKSEAARKRKFK) form a disordered region. The segment covering 43 to 58 (VKKKKKSEAARKRKFK) has biased composition (basic residues).

The protein belongs to the bacterial ribosomal protein bS21 family.

The chain is Small ribosomal subunit protein bS21 from Clostridium botulinum (strain Alaska E43 / Type E3).